Here is a 237-residue protein sequence, read N- to C-terminus: Phosphoribosylaminoimidazole-succinocarboxamide synthase (237 aa).

This sequence belongs to the SAICAR synthetase family.

The catalysed reaction is 5-amino-1-(5-phospho-D-ribosyl)imidazole-4-carboxylate + L-aspartate + ATP = (2S)-2-[5-amino-1-(5-phospho-beta-D-ribosyl)imidazole-4-carboxamido]succinate + ADP + phosphate + 2 H(+). Its pathway is purine metabolism; IMP biosynthesis via de novo pathway; 5-amino-1-(5-phospho-D-ribosyl)imidazole-4-carboxamide from 5-amino-1-(5-phospho-D-ribosyl)imidazole-4-carboxylate: step 1/2. This is Phosphoribosylaminoimidazole-succinocarboxamide synthase from Shigella dysenteriae serotype 1 (strain Sd197).